A 744-amino-acid chain; its full sequence is Collagen alpha-1(VIII) chain (744 aa).

Residues 1–27 (MAVLPGPLQLLGVLLTISLSSIRLIQA) form the signal peptide. The tract at residues 29-117 (AYYGIKPLPP…GKEIPLASLR (89 aa)) is nonhelical region (NC2). Disordered stretches follow at residues 115–393 (SLRG…GEPG) and 459–589 (GPKG…PDMG). The segment at 118–571 (GEQGPRGEPG…PGPPGPPGPP (454 aa)) is triple-helical region (COL1). Over residues 128 to 137 (PRGPPGPPGL) the composition is skewed to pro residues. Over residues 168–178 (KPGAMGMPGAK) the composition is skewed to low complexity. 2 stretches are compositionally biased toward gly residues: residues 203 to 217 (GLPGIGKPGGPGLPG) and 328 to 337 (GFPGGKGEQG). Composition is skewed to low complexity over residues 466 to 496 (QKGVPGLPGVPGLLGPKGEPGIPGDQGLQGP) and 538 to 556 (AGLHGPPGKPGALGPQGQP). Residues 558 to 581 (LPGPPGPPGPPGPPAVMPPTPPPQ) show a composition bias toward pro residues. The segment at 572 to 744 (AVMPPTPPPQ…SFSGYLLYPM (173 aa)) is nonhelical region (NC1). Residues 611–744 (PAYEMPAFTA…SFSGYLLYPM (134 aa)) enclose the C1q domain.

In terms of assembly, homotrimers, or heterotrimers in association with alpha 2(VIII) type collagens. Four homotrimers can form a tetrahedron stabilized by central interacting C-terminal NC1 trimers. Post-translationally, prolines at the third position of the tripeptide repeating unit (G-X-Y) are hydroxylated in some or all of the chains. Proteolytically cleaved by neutrophil elastase, in vitro. Proteolytic processing produces the C-terminal NC1 domain fragment, vastatin. As to expression, expressed primarily in the subendothelium of large blood vessels. Also expressed in arterioles and venules in muscle, heart, kidney, spleen, umbilical cord, liver and lung and is also found in connective tissue layers around hair follicles, around nerve bundles in muscle, in the dura of the optic nerve, in cornea and sclera, and in the perichondrium of cartilaginous tissues. In the kidney, expressed in mesangial cells, glomerular endothelial cells, and tubular epithelial cells. Also expressed in mast cells, and in astrocytes during the repair process. Expressed in Descemet's membrane. Specifically expressed in peritoneal fibroblasts and mesothelial cells.

It localises to the secreted. The protein resides in the extracellular space. The protein localises to the extracellular matrix. Its subcellular location is the basement membrane. In terms of biological role, macromolecular component of the subendothelium. Major component of the Descemet's membrane (basement membrane) of corneal endothelial cells. Also a component of the endothelia of blood vessels. Necessary for migration and proliferation of vascular smooth muscle cells and thus, has a potential role in the maintenance of vessel wall integrity and structure, in particular in atherogenesis. Vastatin, the C-terminal fragment comprising the NC1 domain, inhibits aortic endothelial cell proliferation and causes cell apoptosis. This is Collagen alpha-1(VIII) chain (COL8A1) from Homo sapiens (Human).